We begin with the raw amino-acid sequence, 332 residues long: Multiple virulence factor regulator MvfR (332 aa).

The HTH lysR-type domain maps to 4-61; it reads HNLNHVNMFLQVIASGSISSAARILRKSHTAVSSAVSNLEIDLCVELVRRDGYKVEPT. The H-T-H motif DNA-binding region spans 21–40; the sequence is ISSAARILRKSHTAVSSAVS.

Belongs to the LysR transcriptional regulatory family. In terms of assembly, forms homooligomers.

The protein localises to the cell inner membrane. The protein resides in the secreted. Its activity is regulated as follows. Both 3,4-dihydroxy-2-heptylquinoline (PQS) and its precursor 4-hydroxy-2-heptylquinoline (HHQ) function as ligands and promote MvfR DNA-binding activity leading to transcriptional activation. Transcription regulator that plays a critical role in virulence by positively regulating the expression of multiple quorum sensing (QS)-regulated virulence factors, genes involved in protein secretion, translation, response to oxidative stress and the phnAB operon. At the stationary phase, negatively autoregulates its function through cleavage and translocation to the extracellular space. The sequence is that of Multiple virulence factor regulator MvfR from Pseudomonas aeruginosa (strain ATCC 15692 / DSM 22644 / CIP 104116 / JCM 14847 / LMG 12228 / 1C / PRS 101 / PAO1).